Reading from the N-terminus, the 334-residue chain is Inositol 2-dehydrogenase (334 aa).

It belongs to the Gfo/Idh/MocA family. As to quaternary structure, homotetramer.

It catalyses the reaction myo-inositol + NAD(+) = scyllo-inosose + NADH + H(+). Functionally, involved in the oxidation of myo-inositol (MI) to 2-keto-myo-inositol (2KMI or 2-inosose). The sequence is that of Inositol 2-dehydrogenase from Cereibacter sphaeroides (strain ATCC 17029 / ATH 2.4.9) (Rhodobacter sphaeroides).